A 1000-amino-acid chain; its full sequence is Sop-2-related protein 1 (1000 aa).

3 disordered regions span residues 355–374 (KIMK…QYQQ), 379–422 (HQQH…GPSE), and 466–509 (APSE…VARG). Low complexity predominate over residues 390–404 (SSSSVPSTSSPSCSS). Over residues 406–415 (ANRKEMETVR) the composition is skewed to basic and acidic residues. Residues 489 to 502 (GPSQQQQIPGTSQQ) show a composition bias toward low complexity. The segment at 633-720 (REQILPQQYM…LNTSSVQPSE (88 aa)) is RNA-binding. A disordered region spans residues 948–1000 (HRMHSQRPPSMGNSSTSSEASSTSPTNAATATSSPASNRPTTSTAQPPTLNPT). A compositionally biased stretch (low complexity) spans 960 to 992 (NSSTSSEASSTSPTNAATATSSPASNRPTTSTA).

As to quaternary structure, binds through its N-terminal region to the N-terminal region of sop-2.

The protein resides in the nucleus. Acts synergistically with sop-2 to maintain the transcriptionally repressive state of homeotic genes throughout development. Not required to initiate repression, but to maintain it during later stages of development. Also required to repress expression of other genes. Binds RNA in a sequence-independent manner. In Caenorhabditis elegans, this protein is Sop-2-related protein 1 (sor-1).